Consider the following 161-residue polypeptide: Cyclic pyranopterin monophosphate synthase (161 aa).

Substrate contacts are provided by residues 75-77 and 113-114; these read LCH and ME. Aspartate 128 is a catalytic residue.

The protein belongs to the MoaC family. Homohexamer; trimer of dimers.

It catalyses the reaction (8S)-3',8-cyclo-7,8-dihydroguanosine 5'-triphosphate = cyclic pyranopterin phosphate + diphosphate. The protein operates within cofactor biosynthesis; molybdopterin biosynthesis. Catalyzes the conversion of (8S)-3',8-cyclo-7,8-dihydroguanosine 5'-triphosphate to cyclic pyranopterin monophosphate (cPMP). This Methylobacillus flagellatus (strain ATCC 51484 / DSM 6875 / VKM B-1610 / KT) protein is Cyclic pyranopterin monophosphate synthase.